A 744-amino-acid chain; its full sequence is MTISCLLRIRPALAKSFFENGQRAFASHAAFAEHAKLERIRNIGISAHIDSGKTTLTERILFYTGRIKEMHEVKGKDNVGATMDSMELERQRGITIQSAATYTVWKDHNINIIDTPGHVDFTVEVERALRVLDGAVLVLCSVGGVQSQTLTVNRQMKRYNVPCLAFINKLDRMGANPYRVLGQMKSKLNHNAAFIQLPIGVESNCKGIVDLVKQKALYFDDQLGLTVREDEIPQDMRTECDERRHELIEQLSNVDDAIGELFLEEKTPTPQDLMGAIRRSTLKRTFTPVLVGTALKNKGVQPLLDAVLDYLPNPGEVENLAMIEKKGEEPQKVFLNPARDGKDPFVGLAFKLEAGRFGQLTYLRCYQGVLKKGDSIFNVRSGKKVRLARLVRLHSNNMEDVNEVYAGDIFALFGVDCASGDTFVTDPKLELSMESIFVPDPVVSMAIKPTNTKDRDNFSKAVARFTKEDPTFRFAYDPDVKETLVSGMGELHLEIYAQRMEREYNCPVTLGKPKVAFRETLVAPCEFDYLHKKQSGGQGQYGRVTGILEPLPPHQNTVIEFTDETIGTNVPKQFVPAIEKGFRQMAEKGLLSGHKLSGLKFRLLDGAHHIVDSSELAFMLAAQGAIKSVFENGSWQILEPVMMVEVTAPEEFQGTVIGQLNKRHGIITGTEGTEGWFTIYAEVPLNDMFGYAGELRSSTQGKGEFSMEYSRYSPCMPDVQEQLMREYQASQGIAVPDKKQKKKN.

The N-terminal 25 residues, 1-25 (MTISCLLRIRPALAKSFFENGQRAF), are a transit peptide targeting the mitochondrion. The tr-type G domain maps to 38-315 (ERIRNIGISA…AVLDYLPNPG (278 aa)). Residues 47 to 54 (AHIDSGKT), 114 to 118 (DTPGH), and 168 to 171 (NKLD) each bind GTP.

It belongs to the TRAFAC class translation factor GTPase superfamily. Classic translation factor GTPase family. EF-G/EF-2 subfamily.

It localises to the mitochondrion. It participates in protein biosynthesis; polypeptide chain elongation. Mitochondrial GTPase that catalyzes the GTP-dependent ribosomal translocation step during translation elongation. During this step, the ribosome changes from the pre-translocational (PRE) to the post-translocational (POST) state as the newly formed A-site-bound peptidyl-tRNA and P-site-bound deacylated tRNA move to the P and E sites, respectively. Catalyzes the coordinated movement of the two tRNA molecules, the mRNA and conformational changes in the ribosome. In Culex quinquefasciatus (Southern house mosquito), this protein is Elongation factor G, mitochondrial.